The chain runs to 548 residues: ETS domain-containing transcription factor ERF (548 aa).

Thr3 and Thr7 each carry phosphothreonine. A phosphoserine mark is found at Ser20 and Ser24. Positions 27–107 (IQLWHFILEL…KGKRFTYKFN (81 aa)) form a DNA-binding region, ETS. 3 disordered regions span residues 130–169 (QSAPPVPSGGSHFRFPPSTPSEVLSPTEDPRSPPACSSSS), 184–225 (GSVS…LARL), and 280–304 (SPTLSPMYPSGGGGPSGSGGGSHFS). A phosphoserine mark is found at Ser185 and Ser190. A compositionally biased stretch (gly residues) spans 289-301 (SGGGGPSGSGGGS). Ser327 is subject to Phosphoserine. Positions 342-478 (PQRPDKCPLP…GEAPGASQCM (137 aa)) are disordered. A compositionally biased stretch (pro residues) spans 348–361 (CPLPPMAPETPPVP). Low complexity-rich tracts occupy residues 362-373 (SSASSSSSSSSS) and 394-403 (KAVAGADKSG). Phosphoserine is present on residues Ser431 and Ser435. Residues 431-451 (SEGESEEVEVTDISDEDEEDG) show a composition bias toward acidic residues. Thr441 is subject to Phosphothreonine. A Phosphoserine modification is found at Ser444. Glycyl lysine isopeptide (Lys-Gly) (interchain with G-Cter in SUMO2) cross-links involve residues Lys465, Lys481, and Lys512. Positions 492–548 (CRLEGGGGPAGGFEDEGEDKKVRGEGPGEAGGPLTPRRVSSDLQHATAQLSLEHRDS) are disordered. At Thr526 the chain carries Phosphothreonine; by MAPK1. Residues Ser531, Ser532, and Ser548 each carry the phosphoserine modification. A compositionally biased stretch (polar residues) spans 532–541 (SDLQHATAQL).

It belongs to the ETS family. Phosphorylated by multiple kinases including MAPK1/ERK2 at THR-526. Phosphorylation regulates the activity of ERF. Highest levels in testis, ovary, pancreas, and heart.

It is found in the nucleus. In terms of biological role, potent transcriptional repressor that binds to the H1 element of the Ets2 promoter. May regulate other genes involved in cellular proliferation. Required for extraembryonic ectoderm differentiation, ectoplacental cone cavity closure, and chorioallantoic attachment. May be important for regulating trophoblast stem cell differentiation. This Homo sapiens (Human) protein is ETS domain-containing transcription factor ERF (ERF).